We begin with the raw amino-acid sequence, 130 residues long: MSGGKGKVGSSEKASTSRSAKAGLTFPVGRIHRLLRKGNYAQRVGSGAPVYLTSVLEYLTAEILELAGNAARDNKKSRIIPRHLQLAIRNDEELNKLLGHVTIAQGGVLPNIHQSLLPSKKSIKGASQEL.

The interval 1-21 (MSGGKGKVGSSEKASTSRSAK) is disordered. The residue at position 2 (S2) is an N-acetylserine. K5 and K7 each carry N6-acetyllysine. Q105 carries the N5-methylglutamine modification. Phosphoserine is present on S127. The [ST]-Q motif signature appears at 127–128 (SQ).

It belongs to the histone H2A family. In terms of assembly, the nucleosome is a histone octamer containing two molecules each of H2A, H2B, H3 and H4 assembled in one H3-H4 heterotetramer and two H2A-H2B heterodimers. The octamer wraps approximately 147 bp of DNA. In terms of processing, phosphorylated to form H2AS128ph (gamma-H2A) in response to DNA double-strand breaks (DSBs) generated by exogenous genotoxic agents and by stalled replication forks. Phosphorylation is dependent on the DNA damage checkpoint kinases MEC1/ATR and TEL1/ATM, spreads on either side of a detected DSB site and may mark the surrounding chromatin for recruitment of proteins required for DNA damage signaling and repair. Gamma-H2A is removed from the DNA prior to the strand invasion-primer extension step of the repair process and subsequently dephosphorylated. Dephosphorylation is necessary for efficient recovery from the DNA damage checkpoint. Acetylated by ESA1 to form H2AK4ac and H2AK7ac.

It localises to the nucleus. It is found in the chromosome. Core component of nucleosome which plays a central role in DNA double strand break (DSB) repair. Nucleosomes wrap and compact DNA into chromatin, limiting DNA accessibility to the cellular machineries which require DNA as a template. Histones thereby play a central role in transcription regulation, DNA repair, DNA replication and chromosomal stability. DNA accessibility is regulated via a complex set of post-translational modifications of histones, also called histone code, and nucleosome remodeling. This is Histone H2A.1 (HTA1) from Meyerozyma guilliermondii (strain ATCC 6260 / CBS 566 / DSM 6381 / JCM 1539 / NBRC 10279 / NRRL Y-324) (Yeast).